A 475-amino-acid chain; its full sequence is Putative histidine permease (475 aa).

12 helical membrane-spanning segments follow: residues leucine 20 to threonine 40, alanine 44 to methionine 64, phenylalanine 87 to threonine 107, serine 127 to valine 147, isoleucine 162 to leucine 182, glycine 199 to phenylalanine 219, valine 246 to serine 266, phenylalanine 277 to isoleucine 297, alanine 341 to glycine 361, valine 363 to alanine 383, tyrosine 410 to phenylalanine 430, and glutamine 434 to phenylalanine 454.

The protein belongs to the amino acid-polyamine-organocation (APC) superfamily.

The protein localises to the cell membrane. In Bacillus subtilis (strain 168), this protein is Putative histidine permease (hutM).